The chain runs to 294 residues: Cytidine deaminase (294 aa).

2 CMP/dCMP-type deaminase domains span residues 48-168 (DDNT…FGPN) and 187-294 (ETTD…YYTF). A substrate-binding site is contributed by 89–91 (NME). Histidine 102 provides a ligand contact to Zn(2+). Catalysis depends on glutamate 104, which acts as the Proton donor. Cysteine 129 and cysteine 132 together coordinate Zn(2+).

Belongs to the cytidine and deoxycytidylate deaminase family. Homodimer. It depends on Zn(2+) as a cofactor.

The enzyme catalyses cytidine + H2O + H(+) = uridine + NH4(+). It catalyses the reaction 2'-deoxycytidine + H2O + H(+) = 2'-deoxyuridine + NH4(+). Functionally, this enzyme scavenges exogenous and endogenous cytidine and 2'-deoxycytidine for UMP synthesis. The polypeptide is Cytidine deaminase (Photorhabdus laumondii subsp. laumondii (strain DSM 15139 / CIP 105565 / TT01) (Photorhabdus luminescens subsp. laumondii)).